We begin with the raw amino-acid sequence, 168 residues long: mRNA stability protein IGO1 (168 aa).

The segment covering 1-13 has biased composition (low complexity); that stretch reads MSNENLSPNSSNP. Residues 1-31 form a disordered region; sequence MSNENLSPNSSNPDLTKLNNGESGTIDTSKF. Over residues 17–31 the composition is skewed to polar residues; that stretch reads KLNNGESGTIDTSKF. Phosphoserine occurs at positions 32 and 64. The disordered stretch occupies residues 125-168; it reads KEGSISSGPPSSNNGTIGGGSTSSTPVGNHSSSSSSLYTESPIR. Composition is skewed to low complexity over residues 127–139 and 146–168; these read GSIS…SNNG and TSST…SPIR.

The protein belongs to the endosulfine family. In terms of assembly, interacts with RIM15, DHH1, PBP1, PBP4 and LSM12. In terms of processing, phosphorylated at Ser-64 by RIM15.

In terms of biological role, required for TORC1 to properly control gene expression and chronological life span. Plays an essential role in initiation of the G0 program by preventing the degradation of specific nutrient-regulated mRNAs via the 5'-3' mRNA decay pathway. The polypeptide is mRNA stability protein IGO1 (IGO1) (Saccharomyces cerevisiae (strain ATCC 204508 / S288c) (Baker's yeast)).